Here is a 74-residue protein sequence, read N- to C-terminus: Defensin-like protein 39 (74 aa).

The first 28 residues, 1 to 28 (MEKKSLAALSFLLLLVLFVAQEIVVTEA), serve as a signal peptide directing secretion. 4 disulfides stabilise this stretch: cysteine 31-cysteine 74, cysteine 42-cysteine 63, cysteine 48-cysteine 68, and cysteine 52-cysteine 70.

This sequence belongs to the DEFL family. In terms of tissue distribution, pods.

Its subcellular location is the secreted. Functionally, possesses antifungal activity. In Pisum sativum (Garden pea), this protein is Defensin-like protein 39 (PI39).